Here is a 680-residue protein sequence, read N- to C-terminus: MAPLSLNFKDDKKYKGLTTVWLLSALGNSIVKESNNYYSNKSNSTGNISSSTVKKKDIVNISIPKTCDEIQNFENDFSLRYISNLLYGVTICYNKKTEYVLNDLNHLLVQLQKNDVYAFKAKNKSTRINGLNSNNSIIGNKNNNYTWEECVFFDDDPLYDITKVPALEFLNTTLQDNVSFIEEAKSIRRQDYINELSNSNRFELHGDMTNSDAQSNLGSNVRNSFPLDEIPVDVDFNLDLDDIVSHQGTPLGSHSSSQKDGNDFKFNYQGDELVLNFENDNENNSNGGEDTSVENEGPVANLKDYELGLEAQASEEENDLQQKLNTRMQRGHRADVGGQFSKVQFDAKTSYPNEVLKFNHGNYSHLMEKNRIRKLTGQNFLTSNISSLVRSCGEEEFFSTNWLSIFNDFSNIKTSEWDLYPQGFSSVERGRKRAHSLVSTQSSSSTRSHEYGRKSFRNNKNDNYSSDMENDNLLLNLEQINEDLEDGHYIEENSQGNILDFNLNLPPSSFGRSHTRNSTRSSGFNEDIVGALRRRVGPSEQNFAEEDDSSNSCFSDGSQQNLQQDKTNFQDVILDYQTKKFYDYIKERSIVVGRTTRSNPPFKRKMLLVDIIPSRMGEAQTGANFDDVERGVSRQIAASAFLSLLNLATKGMVKLNEYPVADAVTKDLKLRREDEIIVYA.

2 stretches are compositionally biased toward low complexity: residues 278–290 (ENDNENNSNGGED) and 436–446 (SLVSTQSSSST). Disordered stretches follow at residues 278-297 (ENDNENNSNGGEDTSVENEG), 431-467 (RKRAHSLVSTQSSSSTRSHEYGRKSFRNNKNDNYSSD), and 540-560 (EQNFAEEDDSSNSCFSDGSQQ). Positions 550–560 (SNSCFSDGSQQ) are enriched in polar residues.

It belongs to the rad21 family. In terms of processing, proteolytically cleaved by ESP1. Post-translationally, phosphorylated by CDC5. CDC5 phosphorylation is necessary for cleavage by ESP1 and subsequent removal from chromosome arms.

The protein localises to the nucleus. Its subcellular location is the chromosome. It localises to the centromere. In terms of biological role, replaces the SCC1 mitosis-specific cohesin to ensure sister chromatid cohesion during meiosis. Is cleaved by ESP1 shortly before the first meiotic division, and dissociates from chromatin, allowing sister chromatids to segregate. Is protected from cleavage by SPO13. Promotes localization of the LINC complex subunit MPS3 on nuclear envelope in mitotic cells. In Saccharomyces cerevisiae (strain ATCC 204508 / S288c) (Baker's yeast), this protein is Meiotic recombination protein REC8.